The primary structure comprises 562 residues: DNA ligase (562 aa).

Residue glutamate 250 coordinates ATP. Lysine 252 serves as the catalytic N6-AMP-lysine intermediate. Residues arginine 257, arginine 272, glutamate 302, phenylalanine 342, arginine 417, and lysine 423 each coordinate ATP.

This sequence belongs to the ATP-dependent DNA ligase family. Requires Mg(2+) as cofactor. It depends on Zn(2+) as a cofactor.

It carries out the reaction ATP + (deoxyribonucleotide)n-3'-hydroxyl + 5'-phospho-(deoxyribonucleotide)m = (deoxyribonucleotide)n+m + AMP + diphosphate.. It catalyses the reaction NAD(+) + (deoxyribonucleotide)n-3'-hydroxyl + 5'-phospho-(deoxyribonucleotide)m = (deoxyribonucleotide)n+m + AMP + beta-nicotinamide D-nucleotide.. Its function is as follows. DNA ligase that seals nicks in double-stranded DNA during DNA replication, DNA recombination and DNA repair. Can use both ATP and NAD(+), but NAD(+) may be a preferred nucleotide cofactor. This is DNA ligase from Thermococcus onnurineus (strain NA1).